Here is a 266-residue protein sequence, read N- to C-terminus: Small ribosomal subunit protein uS2 (266 aa).

It belongs to the universal ribosomal protein uS2 family.

This is Small ribosomal subunit protein uS2 from Corynebacterium diphtheriae (strain ATCC 700971 / NCTC 13129 / Biotype gravis).